The primary structure comprises 42 residues: Photosystem I reaction center subunit IX (42 aa).

A helical transmembrane segment spans residues 7–27; the sequence is YLSVAPVLSTLWFVALAGLLI.

Belongs to the PsaJ family.

It localises to the plastid. The protein localises to the chloroplast thylakoid membrane. May help in the organization of the PsaE and PsaF subunits. This Atropa belladonna (Belladonna) protein is Photosystem I reaction center subunit IX.